Here is a 644-residue protein sequence, read N- to C-terminus: Chaperone protein DnaK (644 aa).

At T199 the chain carries Phosphothreonine; by autocatalysis. A disordered region spans residues 605–644 (KKSSEGQAAQGQTQSQESTKPAEEGVVDAEFEEVKEEDKK). Residues 609–623 (EGQAAQGQTQSQEST) show a composition bias toward polar residues. The span at 629–644 (GVVDAEFEEVKEEDKK) shows a compositional bias: acidic residues.

The protein belongs to the heat shock protein 70 family.

Its function is as follows. Acts as a chaperone. This Legionella pneumophila subsp. pneumophila (strain Philadelphia 1 / ATCC 33152 / DSM 7513) protein is Chaperone protein DnaK.